The following is a 62-amino-acid chain: Cytotoxin homolog (62 aa).

4 disulfides stabilise this stretch: Cys3-Cys22, Cys15-Cys40, Cys44-Cys55, and Cys56-Cys61.

Belongs to the three-finger toxin family. Short-chain subfamily. Orphan group XV sub-subfamily. Expressed by the venom gland.

The protein localises to the secreted. Its subcellular location is the target cell membrane. Its function is as follows. Has low cytotoxic activity. The chain is Cytotoxin homolog from Naja kaouthia (Monocled cobra).